Consider the following 50-residue polypeptide: U23-theraphotoxin-Cg1a 2 (50 aa).

3 disulfides stabilise this stretch: Cys-22-Cys-36, Cys-29-Cys-41, and Cys-35-Cys-47.

The protein belongs to the neurotoxin 10 (Hwtx-1) family. 64 (Jztx-20) subfamily. As to expression, expressed by the venom gland.

The protein localises to the secreted. Its function is as follows. Probable ion channel inhibitor. In Chilobrachys guangxiensis (Chinese earth tiger tarantula), this protein is U23-theraphotoxin-Cg1a 2.